Consider the following 364-residue polypeptide: MPKQTVALFFGGKSVEHIISIISARAVASHIDHSRYDITPLYIDRGGHWHGGACAKRILALDVAVLLRNGGQDEVFERLDEITSFDEGKRFDLTAFFDSIDVAFLTLHGSYGEDGKIQGCLDTFDIPYAGCGLTSSALSMDKALTKLCAADAGVEVAGFMSVTSADYAADPQAICNAVTERFAFPVFVKPANLGSSVGISKVHNAAELRPALDKACALDAKVLVEETITGREVEVAVLGNDDPIASVPGEIIPGSDFYDFEDKYVKSDAKLVIPADLPGEVSAAVRNAALTVFKALGCSGMARVDFFVEHGTNRIILNEINTIPGFTDISMYPMLMSASGVEFDELISRLLLLALEKRAINPKI.

The ATP-grasp domain occupies 146–352; the sequence is KLCAADAGVE…FDELISRLLL (207 aa). 179-234 contacts ATP; sequence TERFAFPVFVKPANLGSSVGISKVHNAAELRPALDKACALDAKVLVEETITGREVE. Mg(2+) is bound by residues D305, E319, and N321.

This sequence belongs to the D-alanine--D-alanine ligase family. The cofactor is Mg(2+). Mn(2+) is required as a cofactor.

The protein resides in the cytoplasm. The catalysed reaction is 2 D-alanine + ATP = D-alanyl-D-alanine + ADP + phosphate + H(+). The protein operates within cell wall biogenesis; peptidoglycan biosynthesis. Cell wall formation. This chain is D-alanine--D-alanine ligase, found in Chlorobaculum parvum (strain DSM 263 / NCIMB 8327) (Chlorobium vibrioforme subsp. thiosulfatophilum).